The following is a 456-amino-acid chain: uncharacterized protein (456 aa).

Positions 3 to 61 (LMRKNETREFLIEDIEFPAVGVAFYNDKKVYIKGAVPGQKVLARVSKVRREKIEAKLKE) constitute a TRAM domain. [4Fe-4S] cluster is bound by residues cysteine 74, cysteine 80, cysteine 83, and cysteine 163. S-adenosyl-L-methionine contacts are provided by glutamine 289, tyrosine 318, glutamate 339, and aspartate 384. Residue cysteine 411 is the Nucleophile of the active site.

Belongs to the class I-like SAM-binding methyltransferase superfamily. RNA M5U methyltransferase family.

This is an uncharacterized protein from Clostridium acetobutylicum (strain ATCC 824 / DSM 792 / JCM 1419 / IAM 19013 / LMG 5710 / NBRC 13948 / NRRL B-527 / VKM B-1787 / 2291 / W).